Reading from the N-terminus, the 48-residue chain is Small, acid-soluble spore protein P (48 aa).

Residues 1-12 (MTNKNDGKDMRK) are compositionally biased toward basic and acidic residues. The segment at 1 to 48 (MTNKNDGKDMRKNAPKGAQPGQPEPLSGSKKVKNRNHTRQKHNSSHDM) is disordered. The span at 30 to 48 (KKVKNRNHTRQKHNSSHDM) shows a compositional bias: basic residues.

This sequence belongs to the SspP family.

The protein resides in the spore core. This Bacillus licheniformis (strain ATCC 14580 / DSM 13 / JCM 2505 / CCUG 7422 / NBRC 12200 / NCIMB 9375 / NCTC 10341 / NRRL NRS-1264 / Gibson 46) protein is Small, acid-soluble spore protein P.